The following is a 407-amino-acid chain: Proteasome-activating nucleotidase (407 aa).

The stretch at 22–67 (KEKAYLAELESKVLRLELKNKDITRENVQIKKENEILKRELDKLRI) forms a coiled coil. ATP contacts are provided by residues 192–197 (GTGKTL) and His-331. The tract at residues 405–407 (MYG) is docks into pockets in the proteasome alpha-ring to cause gate opening.

The protein belongs to the AAA ATPase family. In terms of assembly, homohexamer. The hexameric complex has a two-ring architecture resembling a top hat that caps the 20S proteasome core at one or both ends. Upon ATP-binding, the C-terminus of PAN interacts with the alpha-rings of the proteasome core by binding to the intersubunit pockets.

It localises to the cytoplasm. Functionally, ATPase which is responsible for recognizing, binding, unfolding and translocation of substrate proteins into the archaeal 20S proteasome core particle. Is essential for opening the gate of the 20S proteasome via an interaction with its C-terminus, thereby allowing substrate entry and access to the site of proteolysis. Thus, the C-termini of the proteasomal ATPase function like a 'key in a lock' to induce gate opening and therefore regulate proteolysis. Unfolding activity requires energy from ATP hydrolysis, whereas ATP binding alone promotes ATPase-20S proteasome association which triggers gate opening, and supports translocation of unfolded substrates. The protein is Proteasome-activating nucleotidase of Methanococcus vannielii (strain ATCC 35089 / DSM 1224 / JCM 13029 / OCM 148 / SB).